Reading from the N-terminus, the 445-residue chain is MISPVSSILASIWDNSKLLLDHTSVLSIALIGVACAISIRSILYVRLACANYSILLLTHAQRLRLAYSTPLRHVPGPWYAKFTALGLRANDVAGNRWYYVQGLHKKYGSIVRIAPEEVAISDPKVVSKVHALGTEFRKRQQPGTPFNIFSISDPKAHRTRQRFYAKAFSDETLKASTEPAVRQLIKTAVASIKRDAALRKDHTADVYKWCMLFGSDVAFQVIYGNSNTEGLMATQKTTDEVIMGAYLQRMNAWAQFCFPVFLLGRWLSPLSPTLHNIFRVEEKYGDFWQEGQRQREIAARTVFVQNTKYSKNDGVFSVSDEVKLSDVDIAHDITTFLGAGGEPVGASLVFLIWQVLRMPDLQRELEAEVAGLTEPITDATTAQLPILNGVIYETLRLYGGGVTQMPRYAPIATELGGYVIPPGTAVTTHTGALHRNPAAWDDPEK.

The chain crosses the membrane as a helical span at residues 25–45 (VLSIALIGVACAISIRSILYV). An N-linked (GlcNAc...) asparagine glycan is attached at Asn-51.

It belongs to the cytochrome P450 family.

Its subcellular location is the membrane. The protein operates within secondary metabolite biosynthesis. Functionally, methylphloroacetophenone oxidase; part of the gene cluster that mediates the biosynthesis of usnic acid, a dibenzofuran lichen product possessing a broad spectrum of biological activities. Two genes, mpas and mpao, comprise the usnic acid biosynthetic gene cluster with a single post-PKS enzyme, the methylphloracetophenone oxidase (mpao). The methylphloroacetophenone synthase (mpas) is a non-reducing polyketide synthase that produces methylphloracetophenone from acetate via a methylated tetraketide intermediate. The methylphloroacetophenone oxidase then carries out the oxidative dimerization of methylphloracetophenone to usnic acid. The chain is Methylphloroacetophenone oxidase from Cladonia uncialis (Cup lichen).